A 159-amino-acid polypeptide reads, in one-letter code: Putative phosphatidylinositol-3-phosphatase (159 aa).

Residues 1–16 form the signal peptide; that stretch reads MKRPSFLPVLIGTGFG. 4 helical membrane-spanning segments follow: residues 30–50, 54–74, 104–124, and 134–154; these read LLASIIWIALYFLLPFTALLW, ALVVLFTFAGIWAANKLESCW, WYVIAAFALFRIFDIVKPLGV, and VGVMMDDVLAGVYSFILIAVA.

It is found in the membrane. The enzyme catalyses a 1,2-diacyl-sn-glycero-3-phospho-(1D-myo-inositol-3-phosphate) + H2O = a 1,2-diacyl-sn-glycero-3-phospho-(1D-myo-inositol) + phosphate. Its function is as follows. May be responsible for the conversion of phosphatidylinositol phosphate diacylglycerol (PIP-DAG) to phosphatidylinositol diacylglycerol (PI-DAG), making it a key enzyme in the inositol glycerophospholipid biosynthesis pathway. In Bacteroides thetaiotaomicron (strain ATCC 29148 / DSM 2079 / JCM 5827 / CCUG 10774 / NCTC 10582 / VPI-5482 / E50), this protein is Putative phosphatidylinositol-3-phosphatase.